The sequence spans 441 residues: MNQAAAPKVSFVSLGCPKALVDSERIITRLRAEGYELARKHDGADLVIVNTCGFLDSAKKESLGAIGEAMAANGKVIVTGCMGAEPEQIEAAYPNLLSITGPQQYESVLDAVHRALPPLHNPHLDLVPAQGIKLTPRHYAYLKISEGCNNRCSFCIIPKLRGDLVSRPAGEVLREAEKLVKAGVKELLVVSQDTSAYGVDLKYAESPWQDRNVRARFYDLAKELGELGAWVRLQYVYPYPHVDEVIGLMAQGKVLPYLDIPFQHASPEVLKQMKRPAAQDKTLARIKQWREICPELTLRSTFIVGFPGETDSDFAYLLDWLEQAEIDRVGAFKYEAVRGATSNALPDQVSDEVKTERWNALMARQQKISARRLKRKVGTRQQVIIDEVGPTVSKGRSKADAPQIDGSVYLTSRRPLRVGEIVTAKIERADAYDLHGSVAGF.

Residues 7-117 (PKVSFVSLGC…VLDAVHRALP (111 aa)) enclose the MTTase N-terminal domain. [4Fe-4S] cluster contacts are provided by Cys-16, Cys-52, Cys-81, Cys-148, Cys-152, and Cys-155. The region spanning 134 to 371 (LTPRHYAYLK…MARQQKISAR (238 aa)) is the Radical SAM core domain. The TRAM domain maps to 374–440 (KRKVGTRQQV…AYDLHGSVAG (67 aa)).

It belongs to the methylthiotransferase family. RimO subfamily. [4Fe-4S] cluster serves as cofactor.

The protein localises to the cytoplasm. The enzyme catalyses L-aspartate(89)-[ribosomal protein uS12]-hydrogen + (sulfur carrier)-SH + AH2 + 2 S-adenosyl-L-methionine = 3-methylsulfanyl-L-aspartate(89)-[ribosomal protein uS12]-hydrogen + (sulfur carrier)-H + 5'-deoxyadenosine + L-methionine + A + S-adenosyl-L-homocysteine + 2 H(+). Catalyzes the methylthiolation of an aspartic acid residue of ribosomal protein uS12. The polypeptide is Ribosomal protein uS12 methylthiotransferase RimO (Rhodopseudomonas palustris (strain BisB18)).